A 98-amino-acid polypeptide reads, in one-letter code: U11-barytoxin-Tl1b (98 aa).

A signal peptide spans 1–21 (MKTLVLVAVLGLASLYLLSYA). Positions 22 to 50 (SEVQQLSRDEEEFRALVASFGGLFDTEER) are excised as a propeptide. Cystine bridges form between C57–C71, C64–C76, and C70–C89.

Belongs to the neurotoxin 10 (Hwtx-1) family. 25 (ICK4) subfamily. As to expression, expressed by the venom gland.

The protein localises to the secreted. Functionally, ion channel inhibitor. This chain is U11-barytoxin-Tl1b, found in Trittame loki (Brush-footed trapdoor spider).